An 857-amino-acid polypeptide reads, in one-letter code: RNA-directed RNA polymerase 2a (857 aa).

The RdRp catalytic domain occupies 511–624 (KHCLEIDLSK…FSLLPPVGDP (114 aa)). The segment at 782–829 (RRCNDKRRTPTGSYGGGEEAETKISQAESTGTRSQKSQRESAFKSQTV) is disordered. Over residues 804–816 (KISQAESTGTRSQ) the composition is skewed to polar residues.

Belongs to the ssRNA positive-strand viruses RNA-directed RNA polymerase family. In terms of assembly, interacts with replication protein 1a.

The enzyme catalyses RNA(n) + a ribonucleoside 5'-triphosphate = RNA(n+1) + diphosphate. Functionally, RNA-dependent RNA polymerase which replicates the viral genome composed of 3 RNA segments, RNA1, RNA2 and RNA3. The polypeptide is RNA-directed RNA polymerase 2a (Cucumis sativus (Cucumber)).